We begin with the raw amino-acid sequence, 343 residues long: Holliday junction branch migration complex subunit RuvB (343 aa).

The tract at residues 4-193 (TDNLTAAQPQ…FGIVSRLEFY (190 aa)) is large ATPase domain (RuvB-L). Residues leucine 32, arginine 33, glycine 74, lysine 77, threonine 78, threonine 79, 140–142 (EDY), arginine 183, tyrosine 193, and arginine 230 each bind ATP. Threonine 78 contributes to the Mg(2+) binding site. The tract at residues 194-264 (ENRDLTTIVS…VADAALSMLD (71 aa)) is small ATPAse domain (RuvB-S). The segment at 267 to 343 (AQGLDVMDRK…YLHFGLPVEK (77 aa)) is head domain (RuvB-H). Residues arginine 322 and arginine 327 each contribute to the DNA site.

Belongs to the RuvB family. Homohexamer. Forms an RuvA(8)-RuvB(12)-Holliday junction (HJ) complex. HJ DNA is sandwiched between 2 RuvA tetramers; dsDNA enters through RuvA and exits via RuvB. An RuvB hexamer assembles on each DNA strand where it exits the tetramer. Each RuvB hexamer is contacted by two RuvA subunits (via domain III) on 2 adjacent RuvB subunits; this complex drives branch migration. In the full resolvosome a probable DNA-RuvA(4)-RuvB(12)-RuvC(2) complex forms which resolves the HJ.

The protein resides in the cytoplasm. The catalysed reaction is ATP + H2O = ADP + phosphate + H(+). Its function is as follows. The RuvA-RuvB-RuvC complex processes Holliday junction (HJ) DNA during genetic recombination and DNA repair, while the RuvA-RuvB complex plays an important role in the rescue of blocked DNA replication forks via replication fork reversal (RFR). RuvA specifically binds to HJ cruciform DNA, conferring on it an open structure. The RuvB hexamer acts as an ATP-dependent pump, pulling dsDNA into and through the RuvAB complex. RuvB forms 2 homohexamers on either side of HJ DNA bound by 1 or 2 RuvA tetramers; 4 subunits per hexamer contact DNA at a time. Coordinated motions by a converter formed by DNA-disengaged RuvB subunits stimulates ATP hydrolysis and nucleotide exchange. Immobilization of the converter enables RuvB to convert the ATP-contained energy into a lever motion, pulling 2 nucleotides of DNA out of the RuvA tetramer per ATP hydrolyzed, thus driving DNA branch migration. The RuvB motors rotate together with the DNA substrate, which together with the progressing nucleotide cycle form the mechanistic basis for DNA recombination by continuous HJ branch migration. Branch migration allows RuvC to scan DNA until it finds its consensus sequence, where it cleaves and resolves cruciform DNA. The sequence is that of Holliday junction branch migration complex subunit RuvB from Neisseria gonorrhoeae (strain NCCP11945).